Consider the following 225-residue polypeptide: MGQKVNPVGLRLGINRTWDSRWFAARDYAVLLHQDLKLRKFLQGKLQAAGVSRIVIERPAKKARVTIHTARPGVVIGKKGADIEKLRGTLGTMAGGEVSLNIVEIRKPELDARLIAENIASQLERRVAFRRAMKRAVQSAMRLGAQGIRINCSGRLGGAEIARLEWYREGRVPLHTLRADIDYGTATAKTTYGTCGVKVWVFKGEILAHDPMAQDKRAMEQAPAR.

A KH type-2 domain is found at 38–106; sequence LRKFLQGKLQ…EVSLNIVEIR (69 aa).

It belongs to the universal ribosomal protein uS3 family. In terms of assembly, part of the 30S ribosomal subunit. Forms a tight complex with proteins S10 and S14.

Functionally, binds the lower part of the 30S subunit head. Binds mRNA in the 70S ribosome, positioning it for translation. The chain is Small ribosomal subunit protein uS3 from Rhodospirillum centenum (strain ATCC 51521 / SW).